The primary structure comprises 225 residues: Proteasome activator 28 (225 aa).

Belongs to the PA28 family. In terms of assembly, homoheptamer. The homoheptamer associates with the 20S proteasome.

Its subcellular location is the nucleus. Its function is as follows. Subunit of the 11S REG (also called PA28) proteasome regulator, a doughnut-shaped homoheptamer which associates with the proteasome. 11S REG-gamma activates preferentially the trypsin-like catalytic subunit of the proteasome. May also be involved in cell cycle regulation. The chain is Proteasome activator 28 (psmE3) from Dictyostelium discoideum (Social amoeba).